A 266-amino-acid polypeptide reads, in one-letter code: Glutamate racemase (266 aa).

Substrate-binding positions include 9-10 (DS) and 41-42 (YG). Cys-72 (proton donor/acceptor) is an active-site residue. 73–74 (NT) contacts substrate. Residue Cys-184 is the Proton donor/acceptor of the active site. 185–186 (TH) is a binding site for substrate.

Belongs to the aspartate/glutamate racemases family.

The enzyme catalyses L-glutamate = D-glutamate. It participates in cell wall biogenesis; peptidoglycan biosynthesis. Its function is as follows. Provides the (R)-glutamate required for cell wall biosynthesis. The protein is Glutamate racemase of Staphylococcus aureus (strain bovine RF122 / ET3-1).